Consider the following 661-residue polypeptide: Transketolase (661 aa).

A substrate-binding site is contributed by His30. Residues His70 and Gly118–Leu120 each bind thiamine diphosphate. The disordered stretch occupies residues Ser99–Gly118. Asp159 is a Mg(2+) binding site. Gly160 and Asn189 together coordinate thiamine diphosphate. Mg(2+) is bound by residues Asn189 and Val191. Substrate is bound by residues His266, Arg357, and Ser384. Residue His266 participates in thiamine diphosphate binding. Glu411 acts as the Proton donor in catalysis. Phe437 is a thiamine diphosphate binding site. His461, Asp469, and Arg520 together coordinate substrate.

Belongs to the transketolase family. In terms of assembly, homodimer. Mg(2+) serves as cofactor. Requires Ca(2+) as cofactor. It depends on Mn(2+) as a cofactor. The cofactor is Co(2+). Thiamine diphosphate is required as a cofactor.

It catalyses the reaction D-sedoheptulose 7-phosphate + D-glyceraldehyde 3-phosphate = aldehydo-D-ribose 5-phosphate + D-xylulose 5-phosphate. Functionally, catalyzes the transfer of a two-carbon ketol group from a ketose donor to an aldose acceptor, via a covalent intermediate with the cofactor thiamine pyrophosphate. In Physarum polycephalum (Slime mold), this protein is Transketolase (tkt).